The following is a 362-amino-acid chain: Endolytic peptidoglycan transglycosylase RlpA (362 aa).

Residues 1–17 form the signal peptide; sequence MRKQWLGICIAAGMLAA. Cys-18 is lipidated: N-palmitoyl cysteine. Cys-18 is lipidated: S-diacylglycerol cysteine. The disordered stretch occupies residues 198–276; the sequence is PDLSGGAGTS…PSTTPATSPA (79 aa). Over residues 262-276 the composition is skewed to low complexity; the sequence is PVVTAPSTTPATSPA. One can recognise an SPOR domain in the interval 285–361; it reads QSASGNFMVQ…AQLQSFITTA (77 aa).

The protein belongs to the RlpA family.

It localises to the cell membrane. Its function is as follows. Lytic transglycosylase with a strong preference for naked glycan strands that lack stem peptides. The sequence is that of Endolytic peptidoglycan transglycosylase RlpA from Escherichia coli O157:H7.